Consider the following 535-residue polypeptide: Ribonuclease Y (535 aa).

Residues 4-24 (IILAMVCALIGLIIGYVAISM) form a helical membrane-spanning segment. The interval 107-145 (TDRASSLDRKDENLSNKEKMLDSKEQSLTDKSRHINERE) is disordered. The KH domain occupies 225–285 (TITTVHLPDD…IRREIARMTL (61 aa)). The region spanning 351 to 444 (VLRHSVEVGK…VAAADALSSA (94 aa)) is the HD domain.

The protein belongs to the RNase Y family.

It is found in the cell membrane. Its function is as follows. Endoribonuclease that initiates mRNA decay. The polypeptide is Ribonuclease Y (Streptococcus agalactiae serotype Ia (strain ATCC 27591 / A909 / CDC SS700)).